The chain runs to 69 residues: Protein SlyX homolog (69 aa).

It belongs to the SlyX family.

In Maricaulis maris (strain MCS10) (Caulobacter maris), this protein is Protein SlyX homolog.